We begin with the raw amino-acid sequence, 65 residues long: Large ribosomal subunit protein bL35 (65 aa).

Residues 1-16 are compositionally biased toward basic residues; the sequence is MPKQKTHRASAKRFKR. Residues 1-20 form a disordered region; sequence MPKQKTHRASAKRFKRTGSG.

The protein belongs to the bacterial ribosomal protein bL35 family.

The chain is Large ribosomal subunit protein bL35 from Streptococcus pyogenes serotype M1.